Reading from the N-terminus, the 32-residue chain is Snake venom serine proteinase (32 aa).

The Peptidase S1 domain maps to 1 to 32 (VIGGDECDINEHRFLVFLTXASGLACGGTLIN).

It belongs to the peptidase S1 family. Snake venom subfamily. In terms of assembly, monomer. Post-translationally, contains 6 disulfide bonds. In terms of processing, glycosylated. As to expression, expressed by the venom gland.

The protein resides in the secreted. In terms of biological role, cleaves a kininogen analog with the release of kallidin (lysyl-bradykinin). Completely cleaves fibrinogen Aalpha chain, partially cleaves Bbeta chain and has no activity on gamma chain. The protein is Snake venom serine proteinase of Bitis arietans (African puff adder).